The chain runs to 365 residues: Medium chain reductase pydE (365 aa).

Residues 21 to 362 form the Enoyl reductase (ER) domain; sequence KLIDSLPVPP…SKRARGKVLI (342 aa). Residues 185-188, Y226, 274-275, and 354-355 contribute to the NADP(+) site; these read SGSV, IG, and KR.

The protein belongs to the zinc-containing alcohol dehydrogenase family. Monomer.

Its pathway is mycotoxin biosynthesis. In terms of biological role, medium chain reductase; part of the gene cluster that mediates the biosynthesis of pyrrocidines, fungal natural products containing a macrocyclic para-cyclophane connected to a decahydrofluorene ring system that show potent antibiotic activities toward Gram-negative bacteria. Within the pathway, pydE functions synergistically with pydB, pydX and pydZ to form the cyclophane. The pathway begins with the PKS-NRPS pydA which, with the help of the trans-enoyl reductase pydC, synthesizes the polyketide-tyrosyl acyl thioester product which can be reductively off-loaded by the terminal reductase (R) domain in pydA. The alpha/beta hydrolase pydG is then required to catalyze the subsequent Knoevenagel condensation that affords the 3-pyrrolin-2-one ring, whereas the four proteins pydB, pydE, pydX and pydZ then function synergistically to form the cyclophane. PydB and the membrane-bound pydX and pydZ are lipid-binding proteins that can sequester and mold the pdyG product into the inverse S-shape. Binding of the medium chain reductase pydE to the complex would trigger the cascade oxidative cyclization. PydY is involved in the Diels-Alder cycloaddition that forms the decahydrofluorene core. Additional non-enzymatic hydroxylation yields pyrrocidine A2 which can be further reduced into pyrrocidine B by an endogenous reductase. This is Medium chain reductase pydE from Acremonium sp.